Reading from the N-terminus, the 119-residue chain is MLSNIIPLSIGAALGATARWLLNLAVPASIPPATGNLFANWIGAFLIGIFAETVNHPQWKLLLITGFLGSLTTLSGFSLETVTLLQLNRPASALANIFLHTAGSLLLTWLGLKIGAAVK.

Transmembrane regions (helical) follow at residues 5–25 (IIPLSIGAALGATARWLLNLA), 30–50 (IPPATGNLFANWIGAFLIGIF), 59–79 (WKLLLITGFLGSLTTLSGFSL), and 97–117 (IFLHTAGSLLLTWLGLKIGAA). 2 residues coordinate Na(+): Gly-69 and Thr-72.

The protein belongs to the fluoride channel Fluc/FEX (TC 1.A.43) family.

Its subcellular location is the cell inner membrane. The catalysed reaction is fluoride(in) = fluoride(out). Na(+) is not transported, but it plays an essential structural role and its presence is essential for fluoride channel function. Functionally, fluoride-specific ion channel. Important for reducing fluoride concentration in the cell, thus reducing its toxicity. The sequence is that of Fluoride-specific ion channel FluC from Neisseria meningitidis serogroup B (strain ATCC BAA-335 / MC58).